The following is a 167-amino-acid chain: Ribosome maturation factor RimM (167 aa).

The PRC barrel domain occupies 92 to 166 (DGVYYYRELL…EVRVELMEGL (75 aa)).

The protein belongs to the RimM family. Binds ribosomal protein uS19.

Its subcellular location is the cytoplasm. Functionally, an accessory protein needed during the final step in the assembly of 30S ribosomal subunit, possibly for assembly of the head region. Essential for efficient processing of 16S rRNA. May be needed both before and after RbfA during the maturation of 16S rRNA. It has affinity for free ribosomal 30S subunits but not for 70S ribosomes. The polypeptide is Ribosome maturation factor RimM (Lactobacillus delbrueckii subsp. bulgaricus (strain ATCC 11842 / DSM 20081 / BCRC 10696 / JCM 1002 / NBRC 13953 / NCIMB 11778 / NCTC 12712 / WDCM 00102 / Lb 14)).